The primary structure comprises 245 residues: Probable octanoyltransferase 2 (245 aa).

Residues 38–227 (MEYKPVLYFQ…SIEKEFDIKE (190 aa)) form the BPL/LPL catalytic domain. Substrate-binding positions include 89–96 (RGGYETYH), 157–159 (SIG), and 170–172 (GMA). Cys-188 acts as the Acyl-thioester intermediate in catalysis.

The protein belongs to the LipB family.

Its subcellular location is the cytoplasm. The enzyme catalyses octanoyl-[ACP] + L-lysyl-[protein] = N(6)-octanoyl-L-lysyl-[protein] + holo-[ACP] + H(+). It participates in protein modification; protein lipoylation via endogenous pathway; protein N(6)-(lipoyl)lysine from octanoyl-[acyl-carrier-protein]: step 1/2. In terms of biological role, catalyzes the transfer of endogenously produced octanoic acid from octanoyl-acyl-carrier-protein onto the lipoyl domains of lipoate-dependent enzymes. Lipoyl-ACP can also act as a substrate although octanoyl-ACP is likely to be the physiological substrate. In Picrophilus torridus (strain ATCC 700027 / DSM 9790 / JCM 10055 / NBRC 100828 / KAW 2/3), this protein is Probable octanoyltransferase 2.